Consider the following 86-residue polypeptide: RNA-binding protein Hfq (86 aa).

One can recognise a Sm domain in the interval 9–68 (DPYLNTLRKEKVGVSIYLVNGIKLQGTIESFDQFVILLKNTVSQMVYKHAISTVVPVRPI).

It belongs to the Hfq family. Homohexamer.

In terms of biological role, RNA chaperone that binds small regulatory RNA (sRNAs) and mRNAs to facilitate mRNA translational regulation in response to envelope stress, environmental stress and changes in metabolite concentrations. Also binds with high specificity to tRNAs. The sequence is that of RNA-binding protein Hfq from Pseudomonas savastanoi pv. phaseolicola (strain 1448A / Race 6) (Pseudomonas syringae pv. phaseolicola (strain 1448A / Race 6)).